The sequence spans 370 residues: Aminomethyltransferase (370 aa).

It belongs to the GcvT family. In terms of assembly, the glycine cleavage system is composed of four proteins: P, T, L and H.

The enzyme catalyses N(6)-[(R)-S(8)-aminomethyldihydrolipoyl]-L-lysyl-[protein] + (6S)-5,6,7,8-tetrahydrofolate = N(6)-[(R)-dihydrolipoyl]-L-lysyl-[protein] + (6R)-5,10-methylene-5,6,7,8-tetrahydrofolate + NH4(+). In terms of biological role, the glycine cleavage system catalyzes the degradation of glycine. The protein is Aminomethyltransferase of Clostridium botulinum (strain Okra / Type B1).